A 197-amino-acid polypeptide reads, in one-letter code: Ion-translocating oxidoreductase complex subunit B (197 aa).

A hydrophobic region spans residues 1-26 (MSIVIIAVLALSALALTFGAVLGFAS). Residues 32-90 (EGNPIVDQIDGLLPQTQCGQCGYPGCRPYAEAIANGDAINKCPPGGEATITALADLLDV) enclose the 4Fe-4S domain. [4Fe-4S] cluster is bound by residues C49, C52, C57, C73, C115, C118, C121, C125, C145, C148, C151, and C155. 2 4Fe-4S ferredoxin-type domains span residues 106 to 135 (QVAYIREDECIGCTKCIQACPVDAILGAAK) and 136 to 165 (QMHTVIVSECTGCDLCVEPCPVDCIDMIPA).

This sequence belongs to the 4Fe4S bacterial-type ferredoxin family. RnfB subfamily. The complex is composed of six subunits: RnfA, RnfB, RnfC, RnfD, RnfE and RnfG. [4Fe-4S] cluster is required as a cofactor.

It is found in the cell inner membrane. In terms of biological role, part of a membrane-bound complex that couples electron transfer with translocation of ions across the membrane. This chain is Ion-translocating oxidoreductase complex subunit B, found in Hahella chejuensis (strain KCTC 2396).